The following is a 373-amino-acid chain: RNA 3'-terminal phosphate cyclase-like protein (373 aa).

The protein belongs to the RNA 3'-terminal cyclase family. Type 2 subfamily. Part of the small subunit (SSU) processome, composed of more than 70 proteins and the RNA chaperone small nucleolar RNA (snoRNA) U3. Interacts with BMS1.

It is found in the nucleus. The protein localises to the nucleolus. In terms of biological role, as part of the small subunit (SSU) processome, it plays a role in 40S-ribosomal-subunit biogenesis in the early pre-rRNA processing steps at sites A0, A1 and A2 that are required for proper maturation of the 18S RNA. Activates BMS1 by promoting GDP/GTP exchange. Does not have cyclase activity. The protein is RNA 3'-terminal phosphate cyclase-like protein of Homo sapiens (Human).